Here is a 334-residue protein sequence, read N- to C-terminus: Malate dehydrogenase, cytoplasmic (334 aa).

NAD(+) is bound at residue 11–17 (GAAGQIA). Substrate is bound by residues Arg92 and Arg98. Residues Asn105, Gln112, and 129-131 (VGN) each bind NAD(+). Substrate contacts are provided by Asn131 and Arg162. The active-site Proton acceptor is His187.

The protein belongs to the LDH/MDH superfamily. MDH type 2 family. In terms of assembly, homodimer.

The protein resides in the cytoplasm. It is found in the cytosol. The catalysed reaction is (S)-malate + NAD(+) = oxaloacetate + NADH + H(+). The enzyme catalyses (S)-2-hydroxyglutarate + NAD(+) = 2-oxoglutarate + NADH + H(+). Functionally, catalyzes the reduction of aromatic alpha-keto acids in the presence of NADH. Plays essential roles in the malate-aspartate shuttle and the tricarboxylic acid cycle, important in mitochondrial NADH supply for oxidative phosphorylation. Catalyzes the reduction of 2-oxoglutarate to 2-hydroxyglutarate, leading to elevated reactive oxygen species (ROS). This Xenopus laevis (African clawed frog) protein is Malate dehydrogenase, cytoplasmic (mdh1).